The sequence spans 397 residues: Elongation factor Tu (397 aa).

The tr-type G domain occupies 10–206 (KPHVNIGTIG…AVDENVPDPE (197 aa)). The interval 19 to 26 (GHVDHGKT) is G1. GTP is bound at residue 19-26 (GHVDHGKT). Thr26 lines the Mg(2+) pocket. Residues 62-66 (GITIQ) are G2. Positions 83–86 (DAPG) are G3. GTP is bound by residues 83–87 (DAPGH) and 138–141 (NKAD). The segment at 138-141 (NKAD) is G4. The segment at 176 to 178 (SAL) is G5.

Belongs to the TRAFAC class translation factor GTPase superfamily. Classic translation factor GTPase family. EF-Tu/EF-1A subfamily. Monomer.

The protein resides in the cytoplasm. It catalyses the reaction GTP + H2O = GDP + phosphate + H(+). GTP hydrolase that promotes the GTP-dependent binding of aminoacyl-tRNA to the A-site of ribosomes during protein biosynthesis. In Saccharopolyspora erythraea (strain ATCC 11635 / DSM 40517 / JCM 4748 / NBRC 13426 / NCIMB 8594 / NRRL 2338), this protein is Elongation factor Tu.